The following is a 592-amino-acid chain: Frizzled-1 (592 aa).

The disordered stretch occupies residues 1 to 26; the sequence is MAERRGPAGGGSGEVGGGRRAGGDRC. The N-terminal stretch at 1–48 is a signal peptide; that stretch reads MAERRGPAGGGSGEVGGGRRAGGDRCPRRPPALPLLLLLWAAALPAGG. Over residues 7 to 20 the composition is skewed to gly residues; the sequence is PAGGGSGEVGGGRR. The Extracellular portion of the chain corresponds to 49–271; that stretch reads QPAAQPAALS…PEELRFSRTW (223 aa). The region spanning 65-184 is the FZ domain; it reads PDHGYCQPIS…HGAGELCVGQ (120 aa). Intrachain disulfides connect C70–C131, C78–C124, C115–C152, C141–C181, and C145–C169. N84 is a glycosylation site (N-linked (GlcNAc...) asparagine). N185 is a glycosylation site (N-linked (GlcNAc...) asparagine). Residues 185–219 form a disordered region; sequence NASERGTPTPALRPESWTSNPHRGGGAGGSGPGEA. Residues 207-218 are compositionally biased toward gly residues; that stretch reads RGGGAGGSGPGE. Residues 272–292 traverse the membrane as a helical segment; that stretch reads IGIWSVLCCASTLFTVLTYLV. At 293–303 the chain is on the cytoplasmic side; that stretch reads DMKRFSYPERP. Residues 304 to 324 traverse the membrane as a helical segment; sequence IIFLSGCYTAVAVAYIAGFLL. The Extracellular portion of the chain corresponds to 325–351; sequence EERVVCNERFAEDGSRTVAQGTKREGC. A helical transmembrane segment spans residues 352–372; sequence TILFMMLYFFGMASSIWWVIL. At 373–394 the chain is on the cytoplasmic side; that stretch reads SLTWFLAAGMKWGHEAIEANSQ. The chain crosses the membrane as a helical span at residues 395–415; the sequence is YFHLAAWAVPAIKTITILALG. The Extracellular segment spans residues 416–438; that stretch reads QVDGDVLSGVCFVGINNVDALRG. A helical transmembrane segment spans residues 439 to 459; that stretch reads FVLAPLFVYLFIGTSFLLAGF. Over 460-485 the chain is Cytoplasmic; the sequence is VSLFRIRTIMKHDGTKTEKLEKLMVR. A helical transmembrane segment spans residues 486–506; sequence IGIFSVLYTVPATIVIACYFY. The Extracellular portion of the chain corresponds to 507-546; sequence EQAFREQWERSWVTQSCKSYAIPCPNNHSSHHPPMSPDFT. Residue N533 is glycosylated (N-linked (GlcNAc...) asparagine). Residues 547 to 567 traverse the membrane as a helical segment; the sequence is VFMIKYLMTLIVGITSGFWIW. Residues 568–592 lie on the Cytoplasmic side of the membrane; the sequence is SGKTLNSWRKFYTRLTNSKQGETTV. The Lys-Thr-X-X-X-Trp motif, mediates interaction with the PDZ domain of Dvl family members motif lies at 570 to 575; sequence KTLNSW. The PDZ-binding signature appears at 590–592; it reads TTV.

It belongs to the G-protein coupled receptor Fz/Smo family. In terms of tissue distribution, expressed in the lens, otic placode (medial wall of the vesicle) and in epibranchial placode. Also expressed in the developing somites (dermomyotome).

The protein localises to the cell membrane. In terms of biological role, receptor for Wnt proteins. Functions in the canonical Wnt/beta-catenin signaling pathway. The canonical Wnt/beta-catenin signaling pathway leads to the activation of disheveled proteins, inhibition of GSK-3 kinase, nuclear accumulation of beta-catenin and activation of Wnt target genes. A second signaling pathway involving PKC and calcium fluxes has been seen for some family members, but it is not yet clear if it represents a distinct pathway or if it can be integrated in the canonical pathway, as PKC seems to be required for Wnt-mediated inactivation of GSK-3 kinase. Both pathways seem to involve interactions with G-proteins. May be involved in transduction and intercellular transmission of polarity information during tissue morphogenesis and/or in differentiated tissues. The sequence is that of Frizzled-1 (FZD1) from Gallus gallus (Chicken).